Consider the following 286-residue polypeptide: Beta-lactamase SHV-46 (286 aa).

The signal sequence occupies residues 1-21 (MRYIRLCIISLLATLPLAVHA). The active-site Acyl-ester intermediate is the serine 66. Cysteine 73 and cysteine 119 are disulfide-bonded. Catalysis depends on glutamate 164, which acts as the Proton acceptor. 230 to 232 (KTG) lines the substrate pocket.

The protein belongs to the class-A beta-lactamase family.

The catalysed reaction is a beta-lactam + H2O = a substituted beta-amino acid. This Klebsiella oxytoca protein is Beta-lactamase SHV-46 (bla).